Consider the following 232-residue polypeptide: Small ribosomal subunit protein uS2 (232 aa).

Belongs to the universal ribosomal protein uS2 family.

The polypeptide is Small ribosomal subunit protein uS2 (Syntrophomonas wolfei subsp. wolfei (strain DSM 2245B / Goettingen)).